A 593-amino-acid polypeptide reads, in one-letter code: Acetyl-coenzyme A transferase nodX (593 aa).

Residues 572–593 are disordered; it reads DEDEQGSGFRSGSGLGSGSIAD. The segment covering 580–593 has biased composition (gly residues); sequence FRSGSGLGSGSIAD.

It belongs to the CoA-transferase III family.

The protein operates within secondary metabolite biosynthesis. Its function is as follows. Acetyl-coenzyme A transferase; part of the gene cluster that mediates the biosynthesis of the indole diterpenes nodulisporic acids (NA). Nodulisporic acid A (NAA) and its chemically modified derivatives are of particular significance because of their highly potent insecticidal activity against blood-feeding arthropods and lack of observable adverse effects on mammals, in particular the tremogenicity associated with the paspaline-derived IDTs is not observed. The geranylgeranyl diphosphate (GGPP) synthase ggs1, localized outside of the cluster, is proposed to catalyze the first step in nodulisporic acid biosynthesis via conversion of farnesyl pyrophosphate and isopentyl pyrophosphate into geranylgeranyl pyrophosphate (GGPP). Condensation of indole-3-glycerol phosphate with GGPP by the prenyl transferase nodC then forms 3-geranylgeranylindole (3-GGI). Epoxidation by the FAD-dependent monooxygenase nodM leads to a single-epoxidized-GGI that is substrate of the terpene cyclase nodB for cyclization to yield emindole SB. The terminal methyl carbon, C28, of emindole SB is then oxidized by the cytochrome P450 monooxygenase nodW to produce nodulisporic acid F (NAF), the pentacyclic core of NAA. NAF is converted to nodulisporic acid E (NAE) via prenylation. This step is probably performed by one of the indole diterpene prenyltransferases nodD1 or nodD2. Several oxidation steps performed by the FAD-linked oxidoreductase nodO and one of the cytochrome P450 monooxygenase nodR, nodX or nodZ further convert NAE to nodulisporic acid D (NAD). NAD is substrate of cytochrome P450 monooxygenase nodJ to produce the precursor of nodulisporic acid C (NAC), converted to NAC by one of the indole diterpene prenyltransferases nodD1 or nodD2. The FAD-dependent monooxygenase nodY2 then oxidizes NAC to nodulisporic acid B (NAB). Finally NAB is converted to NAA by one of the cytochrome P450 monooxygenases nodR, nodX or nodZ. The sequence is that of Acetyl-coenzyme A transferase nodX from Hypoxylon pulicicidum.